A 452-amino-acid chain; its full sequence is MSGTRASNDRSSHPGGHKRPRYDVGNKVTVVLGAQWGDEGKGKVVDLLATDSDIICRCQGGNNAGHTVVVEGKEYDFHLFPSGIINPKAISFIGNGVVIHLPGLFEEADKNEKKGLKDWEKRLIISDRAHIVCDFHQAVDGLQEVQRQAQEGKNIGTTKKGIGPTYSSKASRTGLRICDLLSDFDEFSARFKNLAHQHQSMFSNLEVDIDGQLKKLKMYAEKIRPMVRDGVYFMYEALHGSPKKILVEGANAALLDIDFGTYPFVTSSNCTVGGVCTGLGIPPQNIGDVYGVVKTYSTRVGIGAFPTEQINEIGNLLQTRGHEWGVTTGRKRRCGWLDLVILRYAHMINGFTALALTKLDILDVLDEIKVGVAYRLNGKRIPYFPANQEILQKVEVEYEAMPGWKCDTTGARKWEDLPTRAQNYIRFVENHIGVPVKWVGVGKSRESMIELF.

Residues 1–22 (MSGTRASNDRSSHPGGHKRPRY) are disordered. GTP contacts are provided by residues 37–43 (GDEGKGK) and 65–67 (GHT). The Proton acceptor role is filled by aspartate 38. Mg(2+) is bound by residues aspartate 38 and glycine 65. Aspartate 38 lines the substrate pocket. Residues 38–41 (DEGK), 63–66 (NAGH), threonine 158, arginine 172, asparagine 251, threonine 266, and arginine 330 contribute to the IMP site. Histidine 66 (proton donor) is an active-site residue. 326–332 (VTTGRKR) contributes to the substrate binding site. Residues arginine 332, 358–360 (KLD), and 440–443 (GVGK) each bind GTP.

It belongs to the adenylosuccinate synthetase family. As to quaternary structure, homodimer. It depends on Mg(2+) as a cofactor.

The protein localises to the cytoplasm. It catalyses the reaction IMP + L-aspartate + GTP = N(6)-(1,2-dicarboxyethyl)-AMP + GDP + phosphate + 2 H(+). Its pathway is purine metabolism; AMP biosynthesis via de novo pathway; AMP from IMP: step 1/2. Functionally, component of the purine nucleotide cycle (PNC), which interconverts IMP and AMP to regulate the nucleotide levels in various tissues, and which contributes to glycolysis and ammoniagenesis. Catalyzes the first committed step in the biosynthesis of AMP from IMP. This is Adenylosuccinate synthetase isozyme 1 (adss1) from Xenopus tropicalis (Western clawed frog).